Consider the following 173-residue polypeptide: RNA pyrophosphohydrolase (173 aa).

The Nudix hydrolase domain occupies 6 to 149 (GFRANVGIIL…KRSVYRRALQ (144 aa)). The Nudix box signature appears at 38–59 (GGIDRGETPMDAMYRELWEEVG).

Belongs to the Nudix hydrolase family. RppH subfamily. It depends on a divalent metal cation as a cofactor.

In terms of biological role, accelerates the degradation of transcripts by removing pyrophosphate from the 5'-end of triphosphorylated RNA, leading to a more labile monophosphorylated state that can stimulate subsequent ribonuclease cleavage. The polypeptide is RNA pyrophosphohydrolase (Psychrobacter cryohalolentis (strain ATCC BAA-1226 / DSM 17306 / VKM B-2378 / K5)).